Consider the following 365-residue polypeptide: Peptide chain release factor 2 (365 aa).

Gln251 is modified (N5-methylglutamine).

It belongs to the prokaryotic/mitochondrial release factor family. Methylated by PrmC. Methylation increases the termination efficiency of RF2.

It is found in the cytoplasm. Functionally, peptide chain release factor 2 directs the termination of translation in response to the peptide chain termination codons UGA and UAA. The protein is Peptide chain release factor 2 of Campylobacter jejuni subsp. jejuni serotype O:23/36 (strain 81-176).